A 165-amino-acid chain; its full sequence is Large ribosomal subunit protein uL5 (165 aa).

It belongs to the universal ribosomal protein uL5 family. In terms of assembly, part of the 50S ribosomal subunit; contacts the 5S rRNA and probably tRNA. Forms a bridge to the 30S subunit in the 70S ribosome.

In terms of biological role, this is one of the proteins that bind and probably mediate the attachment of the 5S RNA into the large ribosomal subunit, where it forms part of the central protuberance. In the 70S ribosome it contacts protein S13 of the 30S subunit (bridge B1b), connecting the 2 subunits; this bridge is implicated in subunit movement. May contact the P site tRNA; the 5S rRNA and some of its associated proteins might help stabilize positioning of ribosome-bound tRNAs. The polypeptide is Large ribosomal subunit protein uL5 (Methanoregula boonei (strain DSM 21154 / JCM 14090 / 6A8)).